We begin with the raw amino-acid sequence, 238 residues long: MSTDVAAADIPVPQVEVAADAAVDTPAAKPAKAPKAAKAKKSTPGPKKPRVTPAHPSYAEMVSEAIAALKERSGSSTIAIGKFIEDKHKAHLPANFRKILLTQIKKLVAAGKLTKVKGSYKLAKAPAAVKPKTATKKKPAAKPKAKAPAKKTAAKSPAKKAAAKPKAKAPAKAKAVAKPKAAAKPKAAAKPKAKAAAKKAPAAATPKKPAARKPPTKRATPVKKAAPAKKPAAKKAKK.

Composition is skewed to low complexity over residues 21–34 and 123–132; these read AAVDTPAAKPAKAP and AKAPAAVKPK. Disordered stretches follow at residues 21 to 57 and 123 to 238; these read AAVDTPAAKPAKAPKAAKAKKSTPGPKKPRVTPAHPS and AKAP…KAKK. The region spanning 54-124 is the H15 domain; that stretch reads AHPSYAEMVS…KVKGSYKLAK (71 aa). Over residues 133-197 the composition is skewed to basic residues; that stretch reads TATKKKPAAK…AAKPKAKAAA (65 aa). Low complexity-rich tracts occupy residues 198 to 208 and 217 to 230; these read KKAPAAATPKK and KRATPVKKAAPAKK.

It belongs to the histone H1/H5 family.

The protein resides in the nucleus. The protein localises to the chromosome. Histones H1 are necessary for the condensation of nucleosome chains into higher-order structures. The polypeptide is Histone H1 (Triticum aestivum (Wheat)).